Consider the following 351-residue polypeptide: uncharacterized protein (351 aa).

The protein belongs to the glycosyltransferase group 1 family. Glycosyltransferase 4 subfamily.

This is an uncharacterized protein from Methanocaldococcus jannaschii (strain ATCC 43067 / DSM 2661 / JAL-1 / JCM 10045 / NBRC 100440) (Methanococcus jannaschii).